Here is a 2094-residue protein sequence, read N- to C-terminus: Nuclear mitotic apparatus protein 1 (2094 aa).

Positions methionine 1–proline 210 are head (Globular). The residue at position 160 (serine 160) is a Phosphoserine. Threonine 161 is modified (phosphothreonine). Phosphoserine is present on residues serine 167 and serine 201. Threonine 209 carries the phosphothreonine modification. Residues glutamine 211–lysine 1681 adopt a coiled-coil conformation. Residue serine 269 is modified to Phosphoserine. Residue lysine 377 is modified to N6-acetyllysine. Serine 386 and serine 398 each carry phosphoserine. Lysine 443 carries the N6-acetyllysine modification. Disordered regions lie at residues glutamine 617–glutamine 636 and leucine 723–lysine 759. Positions asparagine 627–glutamine 636 are enriched in polar residues. An N6-acetyllysine modification is found at lysine 878. Disordered stretches follow at residues serine 921–arginine 1000, leucine 1081–threonine 1143, and glutamate 1173–isoleucine 1223. Residues alanine 935–histidine 951 show a composition bias toward polar residues. Basic and acidic residues-rich tracts occupy residues alanine 956–arginine 972 and glutamine 983–glutamine 998. Serine 1183 is modified (phosphoserine). Residues lysine 1194 to lysine 1206 show a composition bias toward basic and acidic residues. Position 1221 is a phosphoserine (serine 1221). Lysine 1507 bears the N6-acetyllysine mark. The residue at position 1583 (serine 1583) is a Phosphoserine. Lysine 1681 is covalently cross-linked (Glycyl lysine isopeptide (Lys-Gly) (interchain with G-Cter in SUMO2)). The interval lysine 1681 to tyrosine 1858 is membrane-binding domain 1. A tail (Globular) region spans residues phenylalanine 1682–histidine 2094. 3 positions are modified to phosphoserine: serine 1703, serine 1706, and serine 1710. Residues serine 1718–glutamine 1743 form a disordered region. A Tankyrase-binding domain motif is present at residues proline 1724–glycine 1730. A phosphoserine mark is found at serine 1739 and serine 1742. Residue lysine 1748 forms a Glycyl lysine isopeptide (Lys-Gly) (interchain with G-Cter in SUMO1); alternate linkage. Lysine 1748 participates in a covalent cross-link: Glycyl lysine isopeptide (Lys-Gly) (interchain with G-Cter in SUMO2); alternate. At serine 1751 the chain carries Phosphoserine. Serine 1754 bears the Phosphoserine; by PLK1 mark. Tyrosine 1756 is modified (phosphotyrosine). Threonine 1758 bears the Phosphothreonine mark. The tract at residues threonine 1760 to glutamine 1795 is disordered. The segment at threonine 1770–arginine 1792 is 4.1-binding domain. Serine 1771 bears the Phosphoserine; by PLK1 mark. Residues serine 1774 and serine 1782 each carry the phosphoserine modification. Threonine 1786 is modified (phosphothreonine). Residue lysine 1804 forms a Glycyl lysine isopeptide (Lys-Gly) (interchain with G-Cter in SUMO2) linkage. Disordered stretches follow at residues leucine 1807–serine 1883 and glutamate 1937–histidine 2094. Serine 1812 and serine 1815 each carry phosphoserine. The span at serine 1812–leucine 1839 shows a compositional bias: polar residues. A Phosphoserine; by PLK1 modification is found at serine 1816. Tyrosine 1818 is subject to Phosphotyrosine. Serine 1822 carries the phosphoserine modification. Serine 1826 bears the Phosphoserine; alternate mark. The O-linked (GlcNAc) serine; alternate glycan is linked to serine 1826. 2 positions are modified to phosphoserine: serine 1844 and serine 1869. The interval serine 1864–glutamine 1967 is tubulin-binding domain. The interval serine 1874 to arginine 1908 is GPSM2-binding domain. The segment covering glutamate 1937–arginine 1948 has biased composition (basic and acidic residues). Serine 1951 is modified (phosphoserine). Positions isoleucine 1963–glycine 2042 are membrane-binding domain 2. The short motif at arginine 1966–arginine 1971 is the Nuclear localization signal element. Residues serine 1973 and serine 1974 each carry the phosphoserine modification. Threonine 1982 carries the post-translational modification Phosphothreonine. Serine 1985 carries the post-translational modification Phosphoserine. Threonine 1997 carries the phosphothreonine; by CDK1 modification. Positions threonine 1997–lysine 2006 are enriched in basic and acidic residues. Phosphoserine is present on serine 2029. Threonine 2037 carries the post-translational modification Phosphothreonine. Residues serine 2044 and serine 2059 each carry the phosphoserine modification. Serine 2069 carries the post-translational modification Phosphoserine; by CDK1. Residues alanine 2073 to threonine 2085 are compositionally biased toward low complexity. The residue at position 2085 (threonine 2085) is a Phosphothreonine; by CDK1.

As to quaternary structure, homodimer. Also forms multiarm oligomers by association of C-terminal tail domains, oligomers may further assemble to form a hexagonal nuclear lattice-like network. Associates with the dynein-dynactin complex; this association promotes the transport and accumulation of NUMA1 at the mitotic spindle poles that is inhibited by the BRISC complex in a PLK1-dependent manner. Part of a spindle orientation complex at least composed of GNAI1, GPSM2 and NUMA1. Interacts (via C-terminus) with microtubules (MTs); this interaction is direct and promotes both MT bundle formation and stability in a dynein-dynactin complex- and CDK1-independent manner. Interacts with EPB41 and EPB41L2; these interactions are negatively regulated by CDK1 during metaphase and are important for anaphase-specific localization of NUMA1 in symmetrically dividing cells. Interacts (via C-terminus) with GPSM2 (via TPR repeats); this interaction is direct, prevented by competitive binding of INSC, is inhibited in a PLK1-dependent manner, blocks the association of NUMA1 with MTs and inhibits NUMA1-induced MT bundle formation, prevents the association of NUMA1 with SPAG5, induces mitotic spindle pole localization of GPSM2, both metaphase cell cortex localization of NUMA1 and mitotic spindle organization. Does not interact with GPSM2 during anaphase. Interacts (via C-terminus) with the nuclear importin alpha/importin beta receptor; this interaction is inhibited by RanGTP. Interacts (via C-terminus) with KPNB1; this interaction is inhibited by RanGTP and the BRISC complex. Interacts with ABRAXAS2 and the BRISC complex; these interactions regulate mitotic spindle assembly. Interacts (via N-terminal end of the coiled-coil domain) with RAE1; this interaction promotes mitotic spindle formation. Interacts (via C-terminus) with SPAG5 (via C-terminus); this interaction promotes the recruitment of SPAG5 to the MTs at spindle poles in a dynein-dynactin-dependent manner and regulates mitotic spindle organization and proper chromosome alignment during mitosis. Interacts with TNKS; this interaction occurs at the onset of mitosis. Interacts with TNKS2. Interacts with tubulin. Interacts with KHDC3 (via C-terminus). Phosphorylation and dephosphorylation on Thr-2037 regulates the extent of cortical NUMA1 and the dynein-dynactin complex localization during mitotic metaphase and anaphase. In metaphase, phosphorylation on Thr-2037 occurs in a kinase CDK1-dependent manner; this phosphorylation maintains low levels of cortical dynein-dynactin complex at metaphase, and hence proper spindle positioning. In anaphase, dephosphorylated on Thr-2037 by phosphatase PPP2CA; this dephosphorylation stimulates its membrane association and with the dynein-dynactin complex its enrichment at the cell cortex, and hence robust spindle elongation. Probably also phosphorylated on Thr-1997 and Ser-2069 by CDK1; these phosphorylations may regulate its cell cortex recruitment during metaphase and anaphase. Phosphorylated on Ser-1751, Ser-1754, Ser-1771 and Ser-1816 by PLK1; these phosphorylations induce cortical dynein-dynactin complex dissociation from the NUMA1-GPSM2 complex and negatively regulates cortical dynein-dynactin complex localization. Post-translationally, ADP-ribosylated by TNKS at the onset of mitosis; ADP-ribosylation is not required for its localization to spindle poles. In terms of processing, O-glycosylated during cytokinesis at sites identical or close to phosphorylation sites, this interferes with the phosphorylation status. Ubiquitinated with 'Lys-63'-linked polyubiquitin chains. Deubiquitination by the BRISC complex is important for the incorporation of NUMA1 into mitotic spindle poles and normal spindle pole function, probably by modulating interactions between NUMA1, dynein-dynactin complex and importin-beta. As to expression, expressed in testis, speen, liver, lung, spinal cord and brain. Expressed in Purkinje neurons (at protein level).

It localises to the nucleus. It is found in the nucleoplasm. The protein resides in the nucleus matrix. The protein localises to the chromosome. Its subcellular location is the cytoplasm. It localises to the cytoskeleton. It is found in the microtubule organizing center. The protein resides in the centrosome. The protein localises to the spindle pole. Its subcellular location is the cell cortex. It localises to the cell membrane. It is found in the lateral cell membrane. Microtubule (MT)-binding protein that plays a role in the formation and maintenance of the spindle poles and the alignement and the segregation of chromosomes during mitotic cell division. Functions to tether the minus ends of MTs at the spindle poles, which is critical for the establishment and maintenance of the spindle poles. Plays a role in the establishment of the mitotic spindle orientation during metaphase and elongation during anaphase in a dynein-dynactin-dependent manner. In metaphase, part of a ternary complex composed of GPSM2 and G(i) alpha proteins, that regulates the recruitment and anchorage of the dynein-dynactin complex in the mitotic cell cortex regions situated above the two spindle poles, and hence regulates the correct oritentation of the mitotic spindle. During anaphase, mediates the recruitment and accumulation of the dynein-dynactin complex at the cell membrane of the polar cortical region through direct association with phosphatidylinositol 4,5-bisphosphate (PI(4,5)P2), and hence participates in the regulation of the spindle elongation and chromosome segregation. Also binds to other polyanionic phosphoinositides, such as phosphatidylinositol 3-phosphate (PIP), lysophosphatidic acid (LPA) and phosphatidylinositol triphosphate (PIP3), in vitro. Also required for proper orientation of the mitotic spindle during asymmetric cell divisions. Plays a role in mitotic MT aster assembly. Involved in anastral spindle assembly. Positively regulates TNKS protein localization to spindle poles in mitosis. Highly abundant component of the nuclear matrix where it may serve a non-mitotic structural role, occupies the majority of the nuclear volume. Required for epidermal differentiation and hair follicle morphogenesis. This is Nuclear mitotic apparatus protein 1 from Mus musculus (Mouse).